A 498-amino-acid chain; its full sequence is MRINPTTSGPGVSALEKKNLGHIAQIIGPVLDVVFPPGKMPNIYNALVVKGRDTVSQQINVTCEVQQLLGNNRVRAVAMSATDGLMRGMEVIDTGAPLSVPVGGATLGRIFNVLGEPVDDLGPVDTGTTSPIHRSAPAFIQLDTKLSIFETGIKVVDLLAPYRRGGKIGLFGGAGVGKTVLIMELINNIAKAHGGVSVFGGVGERTREGNDLYMEMKESGVINEENIAESKVALVYGQMNEPPGARMRVGLTALTMAEYFRDVNEQDVLLFIDNIFRFVQAGSEVSALLGRMPSAVGYQPTLSTEMGTLQERITSTKEGSITSIQAVYVPADDLTDPAPATTFAHLDATTVLSRGLAAKGIYPAVDPLDSTSTMLQPQIVGEEHYETAQRVKQTLQRYKELQDIIAILGLDELSEEDRLTVARARKIERFLSQPFFVAEVFTGSPGKYVGLAETIRGFKLILSGELDSLPEQAFYLVGNIDEATAKATNLEMENNLKK.

Gly172 to Thr179 is a binding site for ATP.

This sequence belongs to the ATPase alpha/beta chains family. F-type ATPases have 2 components, CF(1) - the catalytic core - and CF(0) - the membrane proton channel. CF(1) has five subunits: alpha(3), beta(3), gamma(1), delta(1), epsilon(1). CF(0) has four main subunits: a(1), b(1), b'(1) and c(9-12).

Its subcellular location is the plastid. It is found in the chloroplast thylakoid membrane. The catalysed reaction is ATP + H2O + 4 H(+)(in) = ADP + phosphate + 5 H(+)(out). Produces ATP from ADP in the presence of a proton gradient across the membrane. The catalytic sites are hosted primarily by the beta subunits. This is ATP synthase subunit beta, chloroplastic from Populus alba (White poplar).